A 623-amino-acid polypeptide reads, in one-letter code: UvrABC system protein C (623 aa).

The GIY-YIG domain occupies 27–105 (GSPGVYRMLD…IKQLKPRYNV (79 aa)). The UVR domain occupies 215–250 (TKVQANLAEQMQAASEAMEFERAAALRDRIKALTQV).

Belongs to the UvrC family. As to quaternary structure, interacts with UvrB in an incision complex.

Its subcellular location is the cytoplasm. In terms of biological role, the UvrABC repair system catalyzes the recognition and processing of DNA lesions. UvrC both incises the 5' and 3' sides of the lesion. The N-terminal half is responsible for the 3' incision and the C-terminal half is responsible for the 5' incision. The protein is UvrABC system protein C of Cereibacter sphaeroides (strain ATCC 17023 / DSM 158 / JCM 6121 / CCUG 31486 / LMG 2827 / NBRC 12203 / NCIMB 8253 / ATH 2.4.1.) (Rhodobacter sphaeroides).